Consider the following 203-residue polypeptide: DNA-directed RNA polymerase III subunit rpc8 (203 aa).

It belongs to the eukaryotic RPB7/RPC8 RNA polymerase subunit family. As to quaternary structure, component of the RNA polymerase III (Pol III) complex consisting of 17 subunits. Rpc25/rpc8 and rpc17/rpc9 form a Pol III subcomplex.

It localises to the cytoplasm. It is found in the nucleus. Functionally, DNA-dependent RNA polymerase catalyzes the transcription of DNA into RNA using the four ribonucleoside triphosphates as substrates. Specific peripheric component of RNA polymerase III which synthesizes small RNAs, such as 5S rRNA and tRNA. In Schizosaccharomyces pombe (strain 972 / ATCC 24843) (Fission yeast), this protein is DNA-directed RNA polymerase III subunit rpc8 (rpc25).